A 290-amino-acid chain; its full sequence is Lipoyl synthase (290 aa).

Positions 32, 37, 43, 58, 62, 65, and 272 each coordinate [4Fe-4S] cluster. One can recognise a Radical SAM core domain in the interval 44 to 261; that stretch reads WGEGTATFMI…KEVAVSLGFK (218 aa).

Belongs to the radical SAM superfamily. Lipoyl synthase family. [4Fe-4S] cluster is required as a cofactor.

The protein resides in the cytoplasm. The enzyme catalyses [[Fe-S] cluster scaffold protein carrying a second [4Fe-4S](2+) cluster] + N(6)-octanoyl-L-lysyl-[protein] + 2 oxidized [2Fe-2S]-[ferredoxin] + 2 S-adenosyl-L-methionine + 4 H(+) = [[Fe-S] cluster scaffold protein] + N(6)-[(R)-dihydrolipoyl]-L-lysyl-[protein] + 4 Fe(3+) + 2 hydrogen sulfide + 2 5'-deoxyadenosine + 2 L-methionine + 2 reduced [2Fe-2S]-[ferredoxin]. It participates in protein modification; protein lipoylation via endogenous pathway; protein N(6)-(lipoyl)lysine from octanoyl-[acyl-carrier-protein]: step 2/2. Functionally, catalyzes the radical-mediated insertion of two sulfur atoms into the C-6 and C-8 positions of the octanoyl moiety bound to the lipoyl domains of lipoate-dependent enzymes, thereby converting the octanoylated domains into lipoylated derivatives. The sequence is that of Lipoyl synthase from Pyrobaculum aerophilum (strain ATCC 51768 / DSM 7523 / JCM 9630 / CIP 104966 / NBRC 100827 / IM2).